We begin with the raw amino-acid sequence, 728 residues long: Polyribonucleotide nucleotidyltransferase (728 aa).

Positions 489 and 495 each coordinate Mg(2+). A KH domain is found at 556–615 (PKIDTIKIDVDKIKIVIGKGGETIDKIIAETGVKIDIDEEGNVSIYSSDQDAINRAKEII). One can recognise an S1 motif domain in the interval 625–693 (DEVYHAKVVR…AKGRVDASMK (69 aa)). Residues 691–728 (SMKALLPRPPKPEKSDKHHDKGHPHKKHEEAPLTQTEE) are disordered. Residues 700 to 709 (PKPEKSDKHH) show a composition bias toward basic and acidic residues.

This sequence belongs to the polyribonucleotide nucleotidyltransferase family. It depends on Mg(2+) as a cofactor.

The protein localises to the cytoplasm. The enzyme catalyses RNA(n+1) + phosphate = RNA(n) + a ribonucleoside 5'-diphosphate. In terms of biological role, involved in mRNA degradation. Catalyzes the phosphorolysis of single-stranded polyribonucleotides processively in the 3'- to 5'-direction. This is Polyribonucleotide nucleotidyltransferase from Streptococcus gordonii (strain Challis / ATCC 35105 / BCRC 15272 / CH1 / DL1 / V288).